The sequence spans 387 residues: Phosphoglycerate kinase (387 aa).

Substrate is bound by residues 21 to 23, Arg-36, 59 to 62, Arg-113, and Arg-146; these read DLN and HLGR. ATP contacts are provided by residues Lys-197, Glu-314, and 340–343; that span reads GGDT.

It belongs to the phosphoglycerate kinase family. Monomer.

It localises to the cytoplasm. It carries out the reaction (2R)-3-phosphoglycerate + ATP = (2R)-3-phospho-glyceroyl phosphate + ADP. It participates in carbohydrate degradation; glycolysis; pyruvate from D-glyceraldehyde 3-phosphate: step 2/5. The protein is Phosphoglycerate kinase of Aeromonas hydrophila subsp. hydrophila (strain ATCC 7966 / DSM 30187 / BCRC 13018 / CCUG 14551 / JCM 1027 / KCTC 2358 / NCIMB 9240 / NCTC 8049).